A 444-amino-acid chain; its full sequence is Exodeoxyribonuclease 7 large subunit (444 aa).

The protein belongs to the XseA family. As to quaternary structure, heterooligomer composed of large and small subunits.

The protein localises to the cytoplasm. The enzyme catalyses Exonucleolytic cleavage in either 5'- to 3'- or 3'- to 5'-direction to yield nucleoside 5'-phosphates.. Its function is as follows. Bidirectionally degrades single-stranded DNA into large acid-insoluble oligonucleotides, which are then degraded further into small acid-soluble oligonucleotides. This Xylella fastidiosa (strain M23) protein is Exodeoxyribonuclease 7 large subunit.